Reading from the N-terminus, the 394-residue chain is Elongation factor Tu (394 aa).

The tr-type G domain occupies 10-204; the sequence is KPHINIGTIG…AVDDNIPTPE (195 aa). Residues 19 to 26 are G1; it reads GHVDHGKT. 19 to 26 serves as a coordination point for GTP; the sequence is GHVDHGKT. A Mg(2+)-binding site is contributed by Thr-26. Residues 60–64 are G2; it reads GITIN. The G3 stretch occupies residues 81 to 84; that stretch reads DCPG. GTP contacts are provided by residues 81–85 and 136–139; these read DCPGH and NKID. A G4 region spans residues 136 to 139; it reads NKID. A G5 region spans residues 174 to 176; sequence SAL.

The protein belongs to the TRAFAC class translation factor GTPase superfamily. Classic translation factor GTPase family. EF-Tu/EF-1A subfamily. In terms of assembly, monomer.

The protein resides in the cytoplasm. It catalyses the reaction GTP + H2O = GDP + phosphate + H(+). Functionally, GTP hydrolase that promotes the GTP-dependent binding of aminoacyl-tRNA to the A-site of ribosomes during protein biosynthesis. The polypeptide is Elongation factor Tu (Chlamydia abortus (strain DSM 27085 / S26/3) (Chlamydophila abortus)).